A 232-amino-acid chain; its full sequence is Dehydrogenase OXI1 (232 aa).

The signal sequence occupies residues 1-20 (MTETFKVAITFVSPSSEALA). An NADP(+)-binding site is contributed by leucine 19. A glycan (N-linked (GlcNAc...) asparagine) is linked at asparagine 28. 3 residues coordinate NADP(+): aspartate 42, asparagine 70, and lysine 103. Asparagine 117 carries N-linked (GlcNAc...) asparagine glycosylation. Catalysis depends on proton donor residues serine 119 and serine 121. NADP(+)-binding residues include tyrosine 133, lysine 137, and threonine 168. Tyrosine 133 acts as the Proton acceptor in catalysis. Lysine 137 serves as the catalytic Lowers pKa of active site Tyr.

It belongs to the short-chain dehydrogenases/reductases (SDR) family.

It carries out the reaction a primary alcohol + NAD(+) = an aldehyde + NADH + H(+). The enzyme catalyses a secondary alcohol + NAD(+) = a ketone + NADH + H(+). It functions in the pathway mycotoxin biosynthesis. Dehydrogenase; part of the Tox1A locus, one of the 2 loci that mediate the biosynthesis of T-toxin, a family of linear polyketides 37 to 45 carbons in length, of which the major component is 41 carbons, and which leads to high virulence to maize. One of the PKSs (PKS1 or PKS2) could synthesize a precursor, used subsequently by the other PKS as starter unit, to add additional carbons. Variability in the length of the final carbon backbone C35-47 could be achieved by varying the number of condensation cycles, or use of different starter or extender units or might be due to decarboxylation of the penultimate product, catalyzed by DEC1. Additional proteins are required for the biosynthesis of T-toxin, including oxidoreductases RED1, RED2, RED3, LAM1 and OXI1, as well as esterase TOX9. The chain is Dehydrogenase OXI1 from Cochliobolus heterostrophus (strain C4 / ATCC 48331 / race T) (Southern corn leaf blight fungus).